Reading from the N-terminus, the 356-residue chain is Probable arabinogalactan endo-beta-1,4-galactanase A (356 aa).

A signal peptide spans 1–21 (MLGKMILLPLFVLLCHSLASA). N133 carries an N-linked (GlcNAc...) asparagine glycan. E157 serves as the catalytic Proton donor. The active-site Nucleophile is the E268.

Belongs to the glycosyl hydrolase 53 family.

The protein localises to the secreted. It catalyses the reaction The enzyme specifically hydrolyzes (1-&gt;4)-beta-D-galactosidic linkages in type I arabinogalactans.. Endogalactanase involved in the degradation of plant cell wall polysaccharides, and more particularly of hairy regions of pectin. The chain is Probable arabinogalactan endo-beta-1,4-galactanase A (galA) from Neosartorya fischeri (strain ATCC 1020 / DSM 3700 / CBS 544.65 / FGSC A1164 / JCM 1740 / NRRL 181 / WB 181) (Aspergillus fischerianus).